Consider the following 938-residue polypeptide: Kexin (938 aa).

Positions 1 to 20 are cleaved as a signal peptide; that stretch reads MLPIKLLIFILGYLLSPTLQ. 2 N-linked (GlcNAc...) asparagine glycosylation sites follow: Asn41 and Asn193. The region spanning 179–489 is the Peptidase S8 domain; sequence QWHLINLKYP…YGKTDAYKMV (311 aa). Residues Asp213 and His251 each act as charge relay system in the active site. 2 disulfide bridges follow: Cys267–Cys414 and Cys359–Cys389. Ser422 acts as the Charge relay system in catalysis. Residues Asn441, Asn512, Asn539, and Asn599 are each glycosylated (N-linked (GlcNAc...) asparagine). Positions 498–647 constitute a P/Homo B domain; it reads VKPQAWYYSD…QFRIFGESID (150 aa). Residues 671-768 are disordered; sequence EKQNSKSTTT…DNDNDNGNKK (98 aa). Residues 677–691 show a composition bias toward low complexity; it reads STTTTSSTTTATTTS. Residues 711 to 735 show a composition bias toward polar residues; that stretch reads KVDNSASITTSQTASLTSSNEQHQP. Residues 740 to 762 show a composition bias toward acidic residues; it reads SDSDSDTDDENKQEGEEDNDNDN. A helical membrane pass occupies residues 775-795; sequence GFYLMSIAVVGFIAVLLVMKF. Residues 796–924 are Cytoplasmic-facing; the sequence is HKTPGSGRRR…SGTSTKKYKD (129 aa). Basic residues predominate over residues 798 to 808; it reads TPGSGRRRRRR. The segment at 798-938 is disordered; that stretch reads TPGSGRRRRR…EDHKDVVGTQ (141 aa). Residues 820-831 show a composition bias toward acidic residues; it reads DYSDSDDDEDDF. Residues 832 to 849 are compositionally biased toward basic and acidic residues; sequence DTRRADDDSFDLGHRNDQ. A compositionally biased stretch (low complexity) spans 850-859; sequence RVVSASQQQR. The span at 860-874 shows a compositional bias: basic and acidic residues; it reads QYDRQQDETRDRLFD. Residues 902-919 are compositionally biased toward polar residues; the sequence is QQSAKAPSNSEGNSGTST. The span at 921-938 shows a compositional bias: basic and acidic residues; that stretch reads KYKDNEADEDHKDVVGTQ.

Belongs to the peptidase S8 family. Furin subfamily. It depends on Ca(2+) as a cofactor. In terms of processing, O-glycosylated.

It is found in the golgi apparatus. The protein resides in the trans-Golgi network membrane. It catalyses the reaction Cleavage of -Lys-Arg-|-Xaa- and -Arg-Arg-|-Xaa- bonds to process yeast alpha-factor pheromone and killer toxin precursors.. The protein is Kexin (KEX2) of Candida albicans (strain WO-1) (Yeast).